We begin with the raw amino-acid sequence, 201 residues long: Recombination protein RecR (201 aa).

The C4-type zinc-finger motif lies at 57–72 (CADCRTFTEQEHCTIC). One can recognise a Toprim domain in the interval 81–176 (GQICVVESPA…LASRIAHGVP (96 aa)).

The protein belongs to the RecR family.

Its function is as follows. May play a role in DNA repair. It seems to be involved in an RecBC-independent recombinational process of DNA repair. It may act with RecF and RecO. The polypeptide is Recombination protein RecR (Yersinia enterocolitica serotype O:8 / biotype 1B (strain NCTC 13174 / 8081)).